Here is a 167-residue protein sequence, read N- to C-terminus: Ubiquitin-fold modifier-conjugating enzyme 1 (167 aa).

Cys116 functions as the Glycyl thioester intermediate in the catalytic mechanism. A Glycyl lysine isopeptide (Lys-Gly) (interchain with G-Cter in UFM1) cross-link involves residue Lys122.

The protein belongs to the ubiquitin-conjugating enzyme family. UFC1 subfamily. In terms of assembly, interacts with UBA5 (via C-terminus). Interacts with UFL1. Interacts with UFM1. Interacts with KIRREL3. Ufmylated at Lys-122. Deufmylated by UFSP1.

Functionally, E2-like enzyme which specifically catalyzes the second step in ufmylation. Accepts the ubiquitin-like modifier UFM1 from the E1 enzyme UBA5 and forms an intermediate with UFM1 via a thioester linkage. Ufmylation is involved in various processes, such as ribosome recycling, response to DNA damage, interferon response or reticulophagy (also called ER-phagy). This is Ubiquitin-fold modifier-conjugating enzyme 1 from Bos taurus (Bovine).